The primary structure comprises 499 residues: Serine/threonine-protein kinase SSN3 (499 aa).

The tract at residues 1-21 (MSHSNPPTGASGGPGSASASA) is disordered. The Protein kinase domain occupies 61–442 (YQVIGFISSG…AAAALQHNFF (382 aa)). Residues 67 to 75 (ISSGTYGRV) and K91 contribute to the ATP site. The active-site Proton acceptor is the D193. 2 disordered regions span residues 332–376 (SASG…SAAA) and 463–499 (RRVS…RVKE). Over residues 365 to 376 (SSSSANSSSAAA) the composition is skewed to low complexity. Positions 463-472 (RRVSQEDNDI) are enriched in basic and acidic residues.

This sequence belongs to the protein kinase superfamily. CMGC Ser/Thr protein kinase family. CDC2/CDKX subfamily. Component of the SRB8-11 complex, a regulatory module of the Mediator complex. It depends on Mg(2+) as a cofactor.

The protein resides in the nucleus. It carries out the reaction L-seryl-[protein] + ATP = O-phospho-L-seryl-[protein] + ADP + H(+). The enzyme catalyses L-threonyl-[protein] + ATP = O-phospho-L-threonyl-[protein] + ADP + H(+). It catalyses the reaction [DNA-directed RNA polymerase] + ATP = phospho-[DNA-directed RNA polymerase] + ADP + H(+). Functionally, component of the SRB8-11 complex. The SRB8-11 complex is a regulatory module of the Mediator complex which is itself involved in regulation of basal and activated RNA polymerase II-dependent transcription. The SRB8-11 complex may be involved in the transcriptional repression of a subset of genes regulated by Mediator. It may inhibit the association of the Mediator complex with RNA polymerase II to form the holoenzyme complex. The SRB8-11 complex phosphorylates the C-terminal domain (CTD) of the largest subunit of RNA polymerase II. The protein is Serine/threonine-protein kinase SSN3 (SSN3) of Pyricularia oryzae (strain 70-15 / ATCC MYA-4617 / FGSC 8958) (Rice blast fungus).